The sequence spans 157 residues: Vesicle transport protein SFT2B (157 aa).

Methionine 1 carries the post-translational modification N-acetylmethionine. At 1-36 (MDKLKKVLSGQDTEDRSGLSEVVESSSLSWSTRIKG) the chain is on the cytoplasmic side. Phosphoserine is present on serine 9. Residues 37 to 57 (FIVCFALGILCSLLGTLLLWV) form a helical membrane-spanning segment. Over 58-61 (SRKG) the chain is Lumenal. The helical transmembrane segment at 62–82 (LFAVFYTLGNITSIGSTMFLM) threads the bilayer. Over 83–96 (GPLKQLKRMFEPTR) the chain is Cytoplasmic. The chain crosses the membrane as a helical span at residues 97–117 (LIATILVLLFFVLTLCSAFLW). Over 118–120 (NKG) the chain is Lumenal. The helical transmembrane segment at 121–141 (LALIFCILQSLALTWYSLSYI) threads the bilayer. Topologically, residues 142–157 (PYARDAVKKCFAVCLT) are cytoplasmic.

This sequence belongs to the SFT2 family.

Its subcellular location is the membrane. Its function is as follows. May be involved in fusion of retrograde transport vesicles derived from an endocytic compartment with the Golgi complex. The chain is Vesicle transport protein SFT2B from Rattus norvegicus (Rat).